Consider the following 86-residue polypeptide: MKPNIHPAYRTVVFHDTSANEYFKVGSTIKTEREIELEGVTYPYVTIEVSSKSHPYYTGKQKTFDNEGSAARFQKRFGNFIGAKRG.

It belongs to the bacterial ribosomal protein bL31 family. Type B subfamily. In terms of assembly, part of the 50S ribosomal subunit.

This Citrobacter koseri (strain ATCC BAA-895 / CDC 4225-83 / SGSC4696) protein is Large ribosomal subunit protein bL31B.